We begin with the raw amino-acid sequence, 712 residues long: Matrix metalloproteinase-9 (712 aa).

The N-terminal stretch at 1–19 is a signal peptide; that stretch reads MSPLQPLVLALLVLACCSA. The propeptide at 20-106 is activation peptide; the sequence is VPRRRQPTVV…PRCGVPDVGR (87 aa). N-linked (GlcNAc...) asparagine glycosylation is present at Asn-38. The Cysteine switch signature appears at 97–104; sequence PRCGVPDV. Cys-99 contributes to the Zn(2+) binding site. N-linked (GlcNAc...) asparagine glycosylation is found at Asn-120 and Asn-127. 2 residues coordinate Ca(2+): Asp-131 and Asp-165. 2 residues coordinate Zn(2+): His-175 and Asp-177. The Ca(2+) site is built by Asp-182, Gly-183, Asn-185, and Leu-187. His-190 lines the Zn(2+) pocket. Ca(2+)-binding residues include Gly-197, Gln-199, and Asp-201. His-203 is a Zn(2+) binding site. Ca(2+) is bound by residues Asp-205, Asp-206, and Glu-208. Fibronectin type-II domains lie at 225 to 273, 283 to 331, and 342 to 390; these read AKGA…FCPS, ADGK…FCPT, and AAGE…FCPD. 6 disulfides stabilise this stretch: Cys-230–Cys-256, Cys-244–Cys-271, Cys-288–Cys-314, Cys-302–Cys-329, Cys-347–Cys-373, and Cys-361–Cys-388. His-401 provides a ligand contact to Zn(2+). Glu-402 is an active-site residue. His-405 and His-411 together coordinate Zn(2+). A disordered region spans residues 440–519; it reads QHLYGPRPEP…PTESPDPAED (80 aa). Low complexity predominate over residues 455-465; sequence TTTTTTTTEPQ. Residues 491–504 are compositionally biased toward pro residues; the sequence is TGPPAAGPTGPPTA. Low complexity predominate over residues 505–514; the sequence is GPSAAPTESP. Residues Cys-521 and Cys-709 are joined by a disulfide bond. Hemopexin repeat units follow at residues 523–568, 569–613, 615–662, and 663–709; these read VDIF…WPAL, PRKL…GLGP, VAQV…FPGV, and PIST…LLKC.

This sequence belongs to the peptidase M10A family. As to quaternary structure, exists as monomer or homodimer; disulfide-linked. Also exists as heterodimer with LCN2. Macrophages and transformed cell lines produce only the monomeric form. Interacts with ECM1. Requires Zn(2+) as cofactor. The cofactor is Ca(2+). N- and O-glycosylated.

The protein resides in the secreted. It is found in the extracellular space. The protein localises to the extracellular matrix. The enzyme catalyses Cleavage of gelatin types I and V and collagen types IV and V.. Matrix metalloproteinase that plays an essential role in local proteolysis of the extracellular matrix and in leukocyte migration. Could play a role in bone osteoclastic resorption. Cleaves KiSS1 at a Gly-|-Leu bond. Cleaves NINJ1 to generate the Secreted ninjurin-1 form. Cleaves type IV and type V collagen into large C-terminal three quarter fragments and shorter N-terminal one quarter fragments. Degrades fibronectin but not laminin or Pz-peptide. The chain is Matrix metalloproteinase-9 from Bos taurus (Bovine).